The chain runs to 281 residues: Polyamine aminopropyltransferase (281 aa).

The PABS domain occupies Glu2–Asn237. An S-methyl-5'-thioadenosine-binding site is contributed by Gln33. Positions 64 and 88 each coordinate spermidine. Residues Glu108 and Asp139 to Gly140 contribute to the S-methyl-5'-thioadenosine site. The active-site Proton acceptor is Asp157. Spermidine is bound at residue Asp157–Asp160. Pro164 is an S-methyl-5'-thioadenosine binding site.

The protein belongs to the spermidine/spermine synthase family. Homodimer or homotetramer.

It is found in the cytoplasm. It catalyses the reaction S-adenosyl 3-(methylsulfanyl)propylamine + putrescine = S-methyl-5'-thioadenosine + spermidine + H(+). It functions in the pathway amine and polyamine biosynthesis; spermidine biosynthesis; spermidine from putrescine: step 1/1. In terms of biological role, catalyzes the irreversible transfer of a propylamine group from the amino donor S-adenosylmethioninamine (decarboxy-AdoMet) to putrescine (1,4-diaminobutane) to yield spermidine. This Leptospira biflexa serovar Patoc (strain Patoc 1 / Ames) protein is Polyamine aminopropyltransferase.